Here is an 87-residue protein sequence, read N- to C-terminus: MKTLLLSLVVVTIVCLDLGYTRTCHISTSSTPQTCPKGQDICFRKTQCDKFCSIRGAVIEQGCVATCPEFRSNYRSLLCCRTDNCNP.

A signal peptide spans 1–21 (MKTLLLSLVVVTIVCLDLGYT). Cystine bridges form between Cys-24/Cys-42, Cys-35/Cys-63, Cys-48/Cys-52, Cys-67/Cys-79, and Cys-80/Cys-85.

This sequence belongs to the three-finger toxin family. Long-chain subfamily. Kappa-neurotoxin sub-subfamily. Homo- and heterodimer; non-covalently linked. Expressed by the venom gland.

Its subcellular location is the secreted. Postsynaptic neurotoxin that binds and inhibits neuronal nicotinic acetylcholine receptors (nAChR) with high affinity (IC(50)&lt;100 nM). Is a selective, and slowly reversible antagonist of alpha-3/CHRNA3-containing and some alpha-4/CHRNA4-containing AChRs. The chain is Kappa-6-bungarotoxin from Bungarus multicinctus (Many-banded krait).